We begin with the raw amino-acid sequence, 66 residues long: Small ribosomal subunit protein bS21B (66 aa).

A disordered region spans residues 38–66 (YVKPTQKRKIAKKAAISKAKKEARRSYSY).

The protein belongs to the bacterial ribosomal protein bS21 family.

This chain is Small ribosomal subunit protein bS21B, found in Francisella tularensis subsp. tularensis (strain SCHU S4 / Schu 4).